The sequence spans 559 residues: Methionine--tRNA ligase (559 aa).

The short motif at P10–T20 is the 'HIGH' region element. The Zn(2+) site is built by C141, C144, C154, and C157. Positions K331 to S335 match the 'KMSKS' region motif. K334 provides a ligand contact to ATP.

The protein belongs to the class-I aminoacyl-tRNA synthetase family. MetG type 1 subfamily. Requires Zn(2+) as cofactor.

It is found in the cytoplasm. It catalyses the reaction tRNA(Met) + L-methionine + ATP = L-methionyl-tRNA(Met) + AMP + diphosphate. Its function is as follows. Is required not only for elongation of protein synthesis but also for the initiation of all mRNA translation through initiator tRNA(fMet) aminoacylation. The sequence is that of Methionine--tRNA ligase from Korarchaeum cryptofilum (strain OPF8).